The following is a 298-amino-acid chain: Probable 2-(5''-triphosphoribosyl)-3'-dephosphocoenzyme-A synthase 2 (298 aa).

This sequence belongs to the CitG/MdcB family.

The catalysed reaction is 3'-dephospho-CoA + ATP = 2'-(5''-triphospho-alpha-D-ribosyl)-3'-dephospho-CoA + adenine. The polypeptide is Probable 2-(5''-triphosphoribosyl)-3'-dephosphocoenzyme-A synthase 2 (Salmonella paratyphi A (strain ATCC 9150 / SARB42)).